The sequence spans 670 residues: Solute carrier organic anion transporter family member 1A1 (670 aa).

The Cytoplasmic portion of the chain corresponds to 1 to 20 (MEETEKKIATQEGRLFSKMK). The helical transmembrane segment at 21-40 (VFLLSLTCACLTKSLSGVYM) threads the bilayer. The Extracellular segment spans residues 41–59 (NSMLTQIERQFDISTSVAG). A helical membrane pass occupies residues 60–80 (LINGSFEIGNLFFIVFVSYFG). Residues 81–86 (TKLHRP) lie on the Cytoplasmic side of the membrane. The chain crosses the membrane as a helical span at residues 87 to 111 (VVIGIGCVIMGLGCLLMSLPHFFMG). The Extracellular portion of the chain corresponds to 112 to 155 (RYEYETTISPTGNLSSNSFLCMENRTQTLKPTQDPAECVKEMKS). N-linked (GlcNAc...) asparagine glycosylation is found at Asn-124 and Asn-135. A helical transmembrane segment spans residues 156-184 (LMWICVMVGNIIRGIGETPIVPLGISYIE). The Cytoplasmic portion of the chain corresponds to 185–203 (DFAKSENSPLYIGILEMGK). The chain crosses the membrane as a helical span at residues 204–224 (VAGPIFGLLLGSYCAQIYVDI). Topologically, residues 225–242 (GSVNTDDLTITPSDTRWV) are extracellular. A helical membrane pass occupies residues 243-267 (GAWWIGFLVCAGVNILTSIPFFFLP). Residues 268 to 311 (KALPKKGQQENVAVTKDGKVEKYGGQAREENLGITKDFLTFMKR) are Cytoplasmic-facing. A helical transmembrane segment spans residues 312–333 (LFCNPIYMLFILTSVLQVNGFI). Residues 334-353 (NKFTFLPKYLEQQYGKSTAE) are Extracellular-facing. A helical membrane pass occupies residues 354-377 (AIFLIGVYSLPPICLGYLIGGFIM). Residues 378–381 (KKFK) are Cytoplasmic-facing. Residues 382-405 (ITVKKAAYLAFCLSVFEYLLFLCH) form a helical membrane-spanning segment. Over 406 to 513 (FMLTCDNAAV…PECANRLQYF (108 aa)) the chain is Extracellular. The region spanning 433–488 (SKVLADCNTRCSCSTNTWDPVCGDNGVAYMSACLAGCKKFVGTGTNMVFQDCSCIQ) is the Kazal-like domain. Disulfide bonds link Cys-439–Cys-469, Cys-445–Cys-465, and Cys-454–Cys-486. N-linked (GlcNAc...) asparagine glycosylation occurs at Asn-492. A helical transmembrane segment spans residues 514–536 (LILTIIISFIYSLTAIPGYMVFL). Residues 537–545 (RCVKSEEKS) are Cytoplasmic-facing. A helical transmembrane segment spans residues 546 to 571 (LGVGLHTFCIRVFAGIPAPVYFGALI). Topologically, residues 572-605 (DRTCLHWGTLKCGQRGACRMYDINSFRHIYLGLP) are extracellular. Residues 606-623 (IALRGSSYLPAFFILILM) traverse the membrane as a helical segment. Residues 624–670 (RKFQFPGDIDSSATDHTEMMLGEKESEHTDVHGSPQVENDGELKTKL) lie on the Cytoplasmic side of the membrane. A phosphoserine mark is found at Ser-634 and Ser-635. Residues 645-654 (GEKESEHTDV) show a composition bias toward basic and acidic residues. The interval 645-670 (GEKESEHTDVHGSPQVENDGELKTKL) is disordered.

It belongs to the organo anion transporter (TC 2.A.60) family. As to quaternary structure, binds to PDZK1. Interaction with PDZK1 is required for expression on hepatocyte surface. Glycosylated. In terms of tissue distribution, highly expressed in liver and kidney, and at lower levels in brain, lung, skeletal muscle and proximal colon.

The protein resides in the basolateral cell membrane. It catalyses the reaction estrone 3-sulfate(out) + hydrogencarbonate(in) = estrone 3-sulfate(in) + hydrogencarbonate(out). It carries out the reaction taurocholate(out) + hydrogencarbonate(in) = taurocholate(in) + hydrogencarbonate(out). The enzyme catalyses L-thyroxine(out) = L-thyroxine(in). The catalysed reaction is prostaglandin E2(out) = prostaglandin E2(in). It catalyses the reaction 17beta-estradiol 17-O-(beta-D-glucuronate)(out) = 17beta-estradiol 17-O-(beta-D-glucuronate)(in). It carries out the reaction dehydroepiandrosterone 3-sulfate(out) = dehydroepiandrosterone 3-sulfate(in). Mediates the Na(+)-independent transport of organic anions such as steroid sulfate conjugates (dehydroepiandrosterone sulfate (DHEAS), 17-beta-glucuronosyl estradiol, estrone-3-sulfate), conjugated (taurocholate) and unconjugated (cholate) bile acids, prostaglandin E2 (PGE2) and L-thyroxine T4. Also capable of transporting sulfobromophthalein (BSP), ouabain and gadoxetate. Hydrogencarbonate/HCO3(-) acts as the probable counteranion that exchanges for organic anions. Shows a pH-sensitive substrate specificity which may be ascribed to the protonation state of the binding site and leads to a stimulation of substrate transport in an acidic microenvironment. The chain is Solute carrier organic anion transporter family member 1A1 from Rattus norvegicus (Rat).